The chain runs to 294 residues: 33 kDa chaperonin (294 aa).

2 cysteine pairs are disulfide-bonded: C239–C241 and C272–C275.

Belongs to the HSP33 family. Under oxidizing conditions two disulfide bonds are formed involving the reactive cysteines. Under reducing conditions zinc is bound to the reactive cysteines and the protein is inactive.

The protein localises to the cytoplasm. Redox regulated molecular chaperone. Protects both thermally unfolding and oxidatively damaged proteins from irreversible aggregation. Plays an important role in the bacterial defense system toward oxidative stress. In Listeria innocua serovar 6a (strain ATCC BAA-680 / CLIP 11262), this protein is 33 kDa chaperonin.